The chain runs to 71 residues: Small ribosomal subunit protein bS18 (71 aa).

This sequence belongs to the bacterial ribosomal protein bS18 family. As to quaternary structure, part of the 30S ribosomal subunit. Forms a tight heterodimer with protein bS6.

Functionally, binds as a heterodimer with protein bS6 to the central domain of the 16S rRNA, where it helps stabilize the platform of the 30S subunit. The chain is Small ribosomal subunit protein bS18 from Synechococcus elongatus (strain ATCC 33912 / PCC 7942 / FACHB-805) (Anacystis nidulans R2).